A 352-amino-acid polypeptide reads, in one-letter code: Ion-translocating oxidoreductase complex subunit D (352 aa).

A run of 5 helical transmembrane segments spans residues 20–40, 42–62, 78–109, 123–143, and 148–168; these read IMLL…WFFG, GTLV…ALVL, ALLT…VIIA, PAMI…TSWL, and IAVN…GHTA. Thr-187 bears the FMN phosphoryl threonine mark. Transmembrane regions (helical) follow at residues 214-234, 242-262, 267-287, 301-321, and 322-342; these read ILAG…GLWL, WHIP…GWLF, LAAP…FFIL, LIFG…GGYP, and DGVA…DYYT.

It belongs to the NqrB/RnfD family. As to quaternary structure, the complex is composed of six subunits: RsxA, RsxB, RsxC, RsxD, RsxE and RsxG. The cofactor is FMN.

Its subcellular location is the cell inner membrane. Functionally, part of a membrane-bound complex that couples electron transfer with translocation of ions across the membrane. Required to maintain the reduced state of SoxR. This is Ion-translocating oxidoreductase complex subunit D from Escherichia coli (strain SE11).